The sequence spans 313 residues: Probable cell division protein WhiA (313 aa).

A DNA-binding region (H-T-H motif) is located at residues Ser280 to Gln313.

This sequence belongs to the WhiA family.

Involved in cell division and chromosome segregation. The protein is Probable cell division protein WhiA of Lachnoclostridium phytofermentans (strain ATCC 700394 / DSM 18823 / ISDg) (Clostridium phytofermentans).